A 463-amino-acid chain; its full sequence is MRSTAVLALLLCAGQVFALPVNSPMTKGDTKVMKCVLEVISDSLSKPSPMPVSPECLETLQGDERILSILRHQNLLKELQDLALQGAKERAQQPLKQQQPPKQQQQQQQQQQQEQQHSSFEDELSEVFENQSPDAKHRDAAAEVPSRDTMEKRKDSDKGQQDGFEATTEGPRPQAFPEPNQESPMMGDSESPGEDTATNTQSPTSLPSQEHVDPQATGDSERGLSAQQQARKAKQEEKEEEEEEEAVAREKAGPEEVPTAASSSHFHAGYKAIQKDDGQSDSQAVDGDGKTEASEALPSEGKGELEHSQQEEDGEEAMVGTPQGLFPQGGKGRELEHKQEEEEEEEERLSREWEDKRWSRMDQLAKELTAEKRLEGEDDPDRSMKLSFRTRAYGFRDPGPQLRRGWRPSSREDSVEARSDFEEKKEEEGSANRRAEDQELESLSAIEAELEKVAHQLQALRRG.

The N-terminal stretch at 1–18 is a signal peptide; it reads MRSTAVLALLLCAGQVFA. A disulfide bridge links Cys35 with Cys56. The disordered stretch occupies residues 88 to 440; it reads KERAQQPLKQ…ANRRAEDQEL (353 aa). Residues 92–116 are compositionally biased toward low complexity; the sequence is QQPLKQQQPPKQQQQQQQQQQQEQQ. The residue at position 119 (Ser119) is a Phosphoserine. Positions 134–160 are enriched in basic and acidic residues; the sequence is DAKHRDAAAEVPSRDTMEKRKDSDKGQ. The span at 196-208 shows a compositional bias: polar residues; the sequence is TATNTQSPTSLPS. Ser220, Ser282, and Ser308 each carry phosphoserine. The segment covering 301-310 has biased composition (basic and acidic residues); sequence GKGELEHSQQ. Position 329 is a glycine amide (Gly329). Basic and acidic residues-rich tracts occupy residues 331–340 and 348–375; these read KGRELEHKQE and RLSREWEDKRWSRMDQLAKELTAEKRLE. Phosphoserine is present on residues Ser350 and Ser383. Met384 is modified (methionine sulfoxide). The segment covering 409–437 has biased composition (basic and acidic residues); sequence SSREDSVEARSDFEEKKEEEGSANRRAED. Phosphoserine occurs at positions 410, 414, and 430. Ser430 is a glycosylation site (O-linked (Xyl...) (chondroitin sulfate) serine). Gln438 bears the Pyrrolidone carboxylic acid mark. At Ser444 the chain carries Phosphoserine.

Belongs to the chromogranin/secretogranin protein family. In terms of assembly, self-interacts; self-assembly is promoted in vitro by chondroitin sulfate attachment which occurs at mildly acidic pH conditions. Interacts with SCG3; this interaction is optimal in conditions mimicking the lumenal milieu of the trans-Golgi network, i.e. pH 5.5 and 10 mM Ca(+2). Interacts with ITPR1 in the secretory granules. Post-translationally, O-glycosylated; contains chondroitin sulfate (CS). CS attachment is pH-dependent, being observed at mildly acidic conditions of pH 5 but not at neutral pH, and promotes self-assembly in vitro.

Its subcellular location is the cytoplasmic vesicle. The protein localises to the secretory vesicle. It localises to the neuronal dense core vesicle. The protein resides in the secreted. Functionally, strongly inhibits glucose induced insulin release from the pancreas. In terms of biological role, inhibits catecholamine release from chromaffin cells and noradrenergic neurons by acting as a non-competitive nicotinic cholinergic antagonist. Can induce mast cell migration, degranulation and production of cytokines and chemokines. Its function is as follows. Regulates granule biogenesis in endocrine cells by up-regulating the transcription of protease nexin 1 (SERPINE2) via a cAMP-PKA-SP1 pathway. This leads to inhibition of granule protein degradation in the Golgi complex which in turn promotes granule formation. Pyroglutaminated (pGlu)-serpinin exerts an antiapoptotic effect on cells exposed to oxidative stress. This is Chromogranin-A (Chga) from Mus musculus (Mouse).